A 186-amino-acid polypeptide reads, in one-letter code: Ribosome-recycling factor (186 aa).

It belongs to the RRF family.

Its subcellular location is the cytoplasm. Responsible for the release of ribosomes from messenger RNA at the termination of protein biosynthesis. May increase the efficiency of translation by recycling ribosomes from one round of translation to another. The chain is Ribosome-recycling factor from Methylocella silvestris (strain DSM 15510 / CIP 108128 / LMG 27833 / NCIMB 13906 / BL2).